The following is a 261-amino-acid chain: Ribonuclease PH (261 aa).

Residues Arg87 and 125–127 contribute to the phosphate site; that span reads GTR.

It belongs to the RNase PH family. Homohexameric ring arranged as a trimer of dimers.

It catalyses the reaction tRNA(n+1) + phosphate = tRNA(n) + a ribonucleoside 5'-diphosphate. Functionally, phosphorolytic 3'-5' exoribonuclease that plays an important role in tRNA 3'-end maturation. Removes nucleotide residues following the 3'-CCA terminus of tRNAs; can also add nucleotides to the ends of RNA molecules by using nucleoside diphosphates as substrates, but this may not be physiologically important. Probably plays a role in initiation of 16S rRNA degradation (leading to ribosome degradation) during starvation. This is Ribonuclease PH from Desulforudis audaxviator (strain MP104C).